A 233-amino-acid polypeptide reads, in one-letter code: Homeobox protein Hox-D4a (233 aa).

The Antp-type hexapeptide signature appears at 124 to 129; it reads VYPWMK. Positions 145–204 form a DNA-binding region, homeobox; the sequence is PKRSRTAYTRQQVLELEKEFHFNRYLTRRRRIEIAHTLCLSERQIKIWFQNRRMKWTKDH. Positions 203 to 233 are disordered; the sequence is DHKLPNTKGRSAPASSHLQSIHKDQTDITSL. Positions 223–233 are enriched in basic and acidic residues; that stretch reads IHKDQTDITSL.

Belongs to the Antp homeobox family. Deformed subfamily.

Its subcellular location is the nucleus. Sequence-specific transcription factor which is part of a developmental regulatory system that provides cells with specific positional identities on the anterior-posterior axis. This is Homeobox protein Hox-D4a (hoxd4a) from Takifugu rubripes (Japanese pufferfish).